Reading from the N-terminus, the 365-residue chain is UPF0283 membrane protein Avi_2471 (365 aa).

The span at 1–10 shows a compositional bias: basic and acidic residues; sequence MSKAPEDQRP. A disordered region spans residues 1–47; sequence MSKAPEDQRPMPRRPAAFSLEEPSSSPARPPFAEAQEPQRRAPKSFD. Transmembrane regions (helical) follow at residues 83–103 and 117–137; these read FGKLAGAAFGALASFAIGLWI and LGYTALTLLGIGLLALTVVVI.

Belongs to the UPF0283 family.

It is found in the cell inner membrane. This chain is UPF0283 membrane protein Avi_2471, found in Allorhizobium ampelinum (strain ATCC BAA-846 / DSM 112012 / S4) (Agrobacterium vitis (strain S4)).